A 303-amino-acid chain; its full sequence is Probable serine acetyltransferase 1 (303 aa).

2 disordered regions span residues 1 to 36 and 271 to 290; these read MTAG…ESDA and NPAR…ESMD.

The protein belongs to the transferase hexapeptide repeat family. Homomultimer.

It catalyses the reaction L-serine + acetyl-CoA = O-acetyl-L-serine + CoA. It participates in amino-acid biosynthesis; L-cysteine biosynthesis; L-cysteine from L-serine: step 1/2. The protein is Probable serine acetyltransferase 1 (SAT1) of Oryza sativa subsp. japonica (Rice).